A 528-amino-acid polypeptide reads, in one-letter code: 4-chlorobenzoate--CoA ligase (528 aa).

Residues 161-169 (TSGTTGLPK), 300-305 (NIYGTT), and N409 each bind ATP.

The protein belongs to the ATP-dependent AMP-binding enzyme family. In terms of assembly, homodimer. Mg(2+) serves as cofactor.

The enzyme catalyses 4-chlorobenzoate + ATP + CoA = 4-chlorobenzoyl-CoA + AMP + diphosphate. It participates in xenobiotic degradation; 4-chlorobenzoate degradation; 4-hydroxybenzoate from 4-chlorobenzoate: step 2/3. With respect to regulation, unaffected by 5,5'-dithiobis-(2-nitrobenzoic acid), 4-chloromercuribenzoate and sodium azide. Inhibited by Cu(2+), Fe(2+) and Zn(2+). Unaffected by Na(+), K(+) and Li(+). Its function is as follows. Catalyzes the formation of chlorobenzoyl-CoA via a 2 step reaction. First 4-chlorobenzoyl is adenylated by ATP, followed by acyl transfer from the 4-chlorobenzoyl-AMP intermediate to CoA. Benzoate, 4-bromobenzoate, 4-iodobenzoate and 4-methylbenzoate also act as substrates. Inactive towards 4-aminobenzoate, 4-hydroxybenzoate, 2-aminobenzoate, 2,3-dihydroxybenzoate, 4-coumarate and the aliphatic carboxylic acids palmate, caproate, laurate and butyrate. Negligible activity is detected when ATP is replaced by UTP, CTP or GTP as cosubstrate. The protein is 4-chlorobenzoate--CoA ligase of Pseudomonas sp. (strain CBS-3).